Consider the following 469-residue polypeptide: MIPRIMSTQHPDNYSIPFFANSPVLGGEDEITEAFYAFNVLGADEQMWDFEGKEVDEFVVKKLLERYPSFFRKVILGKDVRLTPRVPNPTVEKAEAKLLLETLQGITRAADYARVFYGEDIAPIFEVILPMTTSLAEIERVHELYRKVVNLADERIYDTTVKEWIGEFYPKEIGIIPLFETKVALLKSAKIIGEYLERREPEYQRVFLARSDPAMNYGLISAVTYVKNALQEIWELEEETSIPIYPIVGVGGPPFRGGMRPDNVDNVLSEYPSVQTYTVQSSFKFDYPTKEVVKAVEKVKSTKRKEPYSLEVPDFITLYEVEYQRQVKILAPHIRRLATRIPDRRKRKLHIGLFGYSRNVGGLSLPRAIKFTASLYSIGVPPELLGLNALTDRQLDVVSEYYVNIYEDLEFAMRFFSFRVAEKAGLKELVERIKEFKPEIEEEYVAEAEIVFRGEGDIIKLAQMRGFLG.

It belongs to the PEPCase type 2 family. Homotetramer. Requires Mg(2+) as cofactor.

It catalyses the reaction oxaloacetate + phosphate = phosphoenolpyruvate + hydrogencarbonate. Its function is as follows. Catalyzes the irreversible beta-carboxylation of phosphoenolpyruvate (PEP) to form oxaloacetate (OAA), a four-carbon dicarboxylic acid source for the tricarboxylic acid cycle. This chain is Phosphoenolpyruvate carboxylase, found in Pyrococcus abyssi (strain GE5 / Orsay).